A 795-amino-acid chain; its full sequence is uncharacterized protein (795 aa).

This is an uncharacterized protein from Methanocaldococcus jannaschii (strain ATCC 43067 / DSM 2661 / JAL-1 / JCM 10045 / NBRC 100440) (Methanococcus jannaschii).